The sequence spans 167 residues: Ribosome maturation factor RimM (167 aa).

In terms of domain architecture, PRC barrel spans 92-166 (DDEFYHADLI…RIVADPPEEQ (75 aa)).

The protein belongs to the RimM family. In terms of assembly, binds ribosomal protein uS19.

The protein localises to the cytoplasm. In terms of biological role, an accessory protein needed during the final step in the assembly of 30S ribosomal subunit, possibly for assembly of the head region. Essential for efficient processing of 16S rRNA. May be needed both before and after RbfA during the maturation of 16S rRNA. It has affinity for free ribosomal 30S subunits but not for 70S ribosomes. The chain is Ribosome maturation factor RimM from Paracoccus denitrificans (strain Pd 1222).